The sequence spans 240 residues: 1-(5-phosphoribosyl)-5-[(5-phosphoribosylamino)methylideneamino] imidazole-4-carboxamide isomerase (240 aa).

Catalysis depends on Asp8, which acts as the Proton acceptor. Asp130 acts as the Proton donor in catalysis.

This sequence belongs to the HisA/HisF family.

Its subcellular location is the cytoplasm. It carries out the reaction 1-(5-phospho-beta-D-ribosyl)-5-[(5-phospho-beta-D-ribosylamino)methylideneamino]imidazole-4-carboxamide = 5-[(5-phospho-1-deoxy-D-ribulos-1-ylimino)methylamino]-1-(5-phospho-beta-D-ribosyl)imidazole-4-carboxamide. Its pathway is amino-acid biosynthesis; L-histidine biosynthesis; L-histidine from 5-phospho-alpha-D-ribose 1-diphosphate: step 4/9. The chain is 1-(5-phosphoribosyl)-5-[(5-phosphoribosylamino)methylideneamino] imidazole-4-carboxamide isomerase from Flavobacterium johnsoniae (strain ATCC 17061 / DSM 2064 / JCM 8514 / BCRC 14874 / CCUG 350202 / NBRC 14942 / NCIMB 11054 / UW101) (Cytophaga johnsonae).